Consider the following 302-residue polypeptide: Snake venom metalloprotease inhibitor 02A10 (302 aa).

An N-terminal signal peptide occupies residues 1–23 (MSVSRLAASGLLLVSLLALALDG). Residues 24 to 47 (KPVEKWSPWLWPPRPRPPIPPLQQ) constitute a propeptide that is removed on maturation. Positions 32-302 (WLWPPRPRPP…CPKLPPSGGH (271 aa)) are disordered. The span at 33–44 (LWPPRPRPPIPP) shows a compositional bias: pro residues. A Pyrrolidone carboxylic acid modification is found at Gln48. Residues 51–58 (LDPPIPQQ) constitute a propeptide that is removed on maturation. Gln59 is modified (pyrrolidone carboxylic acid). Positions 62–69 (LDPPIPQQ) are excised as a propeptide. At Gln70 the chain carries Pyrrolidone carboxylic acid. A propeptide spanning residues 73–80 (LDPPIPQQ) is cleaved from the precursor. At Gln81 the chain carries Pyrrolidone carboxylic acid. Positions 84–91 (LNPPIPQQ) are excised as a propeptide. The residue at position 92 (Gln92) is a Pyrrolidone carboxylic acid. Positions 95–102 (LDPPIPQQ) are excised as a propeptide. A Pyrrolidone carboxylic acid modification is found at Gln103. Residues 106–113 (LNPPIPQQ) constitute a propeptide that is removed on maturation. Gln114 is modified (pyrrolidone carboxylic acid). The propeptide occupies 117 to 124 (LNPPIPQQ). Gln125 is modified (pyrrolidone carboxylic acid). A propeptide spanning residues 128-135 (LNPPIPQQ) is cleaved from the precursor. Gln136 bears the Pyrrolidone carboxylic acid mark. A propeptide spanning residues 139 to 146 (LNPPIPQQ) is cleaved from the precursor. Pyrrolidone carboxylic acid is present on Gln147. Residues 150–157 (LDPPIPQQ) constitute a propeptide that is removed on maturation. Pyrrolidone carboxylic acid is present on Gln158. The propeptide occupies 161-168 (LDPPIPQQ). Gln169 bears the Pyrrolidone carboxylic acid mark. The propeptide occupies 172–179 (LDPPIPQQ). Gln180 bears the Pyrrolidone carboxylic acid mark. The propeptide occupies 183 to 190 (LNPPIPQQ). The residue at position 191 (Gln191) is a Pyrrolidone carboxylic acid. The propeptide occupies 194–201 (LDPPIPQQ). The residue at position 202 (Gln202) is a Pyrrolidone carboxylic acid. A propeptide spanning residues 205–212 (LDPPIPQQ) is cleaved from the precursor. Gln213 is subject to Pyrrolidone carboxylic acid. A propeptide spanning residues 216–223 (LNPPIPQQ) is cleaved from the precursor. Gln224 bears the Pyrrolidone carboxylic acid mark. A propeptide spanning residues 227–273 (QRPLQPEVPSLMELHQERQKQGRMMHHDEDPGDAAEGPRRQKKEPGK) is cleaved from the precursor. Basic and acidic residues-rich tracts occupy residues 240 to 255 (LHQERQKQGRMMHHDE) and 262 to 273 (EGPRRQKKEPGK). Cys279 and Cys293 are oxidised to a cystine. Residues 294–302 (PKLPPSGGH) constitute a propeptide that is removed on maturation.

This sequence in the C-terminal section; belongs to the natriuretic peptide family. As to expression, expressed by the venom gland.

It localises to the secreted. Functionally, pEKW peptides may serve as metalloproteinase inhibitors during glandular storage. Their inhibition may be instantly disengaged, by dilution or physiochemical change, when venom is injected into tissue of the victim. Exhibits hypotensive and vasodepressor activity. Acts by activating natriuretic receptors (NPR1 and/or NPR2 and/or NPR3). The polypeptide is Snake venom metalloprotease inhibitor 02A10 (Svmpi-Cce12) (Cerastes cerastes (Horned desert viper)).